The primary structure comprises 58 residues: Gigasin-4 (58 aa).

Component of the organic matrix of calcified shell layers.

This chain is Gigasin-4, found in Magallana gigas (Pacific oyster).